The chain runs to 656 residues: Bifunctional protein ThiO/ThiG (656 aa).

The thiO stretch occupies residues 1–395; that stretch reads MQTTSDVLII…HAAENSEGSK (395 aa). FAD is bound by residues 7 to 21 and 48 to 50; these read VLIIGGGIIGLAIAV and AGM. Residue Glu56 participates in glycine binding. Val169 is an FAD binding site. Glycine is bound by residues Arg298 and Arg324. Residue 322–328 coordinates FAD; it reads HYRNGIL. Residues 396–656 form a thiG region; that stretch reads DLLEIAGRKF…ASSPLTGLVG (261 aa). Lys498 functions as the Schiff-base intermediate with DXP in the catalytic mechanism. Residues Gly559, 585 to 586, and 607 to 608 each bind 1-deoxy-D-xylulose 5-phosphate; these read AG and NS.

In the N-terminal section; belongs to the DAO family. ThiO subfamily. The protein in the C-terminal section; belongs to the ThiG family. In terms of assembly, interacts with ThiH and ThiS. FAD is required as a cofactor.

It is found in the cytoplasm. The enzyme catalyses glycine + O2 + H2O = glyoxylate + H2O2 + NH4(+). It catalyses the reaction [ThiS sulfur-carrier protein]-C-terminal-Gly-aminoethanethioate + 2-iminoacetate + 1-deoxy-D-xylulose 5-phosphate = [ThiS sulfur-carrier protein]-C-terminal Gly-Gly + 2-[(2R,5Z)-2-carboxy-4-methylthiazol-5(2H)-ylidene]ethyl phosphate + 2 H2O + H(+). It participates in cofactor biosynthesis; thiamine diphosphate biosynthesis. In terms of biological role, catalyzes the FAD-dependent oxidative deamination of glycine. Is essential for thiamine biosynthesis since the oxidation of glycine catalyzed by ThiO generates the glycine imine intermediate (dehydroglycine) required for the biosynthesis of the thiazole ring of thiamine pyrophosphate. Its function is as follows. Catalyzes the rearrangement of 1-deoxy-D-xylulose 5-phosphate (DXP) to produce the thiazole phosphate moiety of thiamine. Sulfur is provided by the thiocarboxylate moiety of the carrier protein ThiS. In vitro, sulfur can be provided by H(2)S. In Synechocystis sp. (strain ATCC 27184 / PCC 6803 / Kazusa), this protein is Bifunctional protein ThiO/ThiG (thiO/thiG).